The following is a 322-amino-acid chain: Epiphycan (322 aa).

The first 19 residues, 1–19 (MGMLARVALGLIIIDAVLA), serve as a signal peptide directing secretion. The disordered stretch occupies residues 58-108 (KVSERLSGNRELLTPGPQLGDNQDEDKDEESTPRLIDGSSPQEPEFPGLLG). An O-linked (Xyl...) (dermatan sulfate) serine glycan is attached at Ser-64. Ser-96 carries an O-linked (GalNAc...) serine glycan. Residues 106-143 (LLGPHTNEDFPTCLLCTCISTTVYCDDHELDAIPPLPK) enclose the LRRNT domain. A disulfide bridge connects residues Cys-118 and Cys-130. LRR repeat units lie at residues 144-165 (KTTY…DFAS), 168-189 (DLKR…AFRK), 192-213 (HLQE…PNTL), 238-258 (DLHH…PLPE), and 259-280 (SLRA…TFCN). The cysteines at positions 279 and 312 are disulfide-linked. 2 N-linked (GlcNAc...) asparagine glycosylation sites follow: Asn-283 and Asn-302. One copy of the LRR 6 repeat lies at 290 to 310 (ALEDIRLDGNPINLSRTPQAY).

Belongs to the small leucine-rich proteoglycan (SLRP) family. SLRP class III subfamily. In terms of processing, the O-linked polysaccharide on Ser-96 is probably the mucin type linked to GalNAc. There is one glycosaminoglycan chain, known to be dermatan sulfate, and it is probably the O-glycosylation at Ser-64. In terms of tissue distribution, confined to the middle zone of embryonic epiphyseal cartilage consisting of flattened chondrocytes and the ossifying region in the limb buds of chick embryos. Has also been detected in testis.

It is found in the secreted. The protein localises to the extracellular space. It localises to the extracellular matrix. In terms of biological role, may have a role in bone formation and also in establishing the ordered structure of cartilage through matrix organization. This is Epiphycan (Epyc) from Mus musculus (Mouse).